The following is a 375-amino-acid chain: Chaperone protein DnaJ (375 aa).

The J domain maps to 4 to 68 (DYYETLGVDR…ETRARYDQFG (65 aa)). The CR-type zinc-finger motif lies at 134 to 216 (GGEKEIRIPH…CGGAGRKQET (83 aa)). Residues Cys147, Cys150, Cys164, Cys167, Cys190, Cys193, Cys204, and Cys207 each coordinate Zn(2+). CXXCXGXG motif repeat units follow at residues 147 to 154 (CQVCNGSG), 164 to 171 (CSTCNGAG), 190 to 197 (CPDCNGAG), and 204 to 211 (CDACGGAG).

Belongs to the DnaJ family. In terms of assembly, homodimer. It depends on Zn(2+) as a cofactor.

The protein resides in the cytoplasm. Its function is as follows. Participates actively in the response to hyperosmotic and heat shock by preventing the aggregation of stress-denatured proteins and by disaggregating proteins, also in an autonomous, DnaK-independent fashion. Unfolded proteins bind initially to DnaJ; upon interaction with the DnaJ-bound protein, DnaK hydrolyzes its bound ATP, resulting in the formation of a stable complex. GrpE releases ADP from DnaK; ATP binding to DnaK triggers the release of the substrate protein, thus completing the reaction cycle. Several rounds of ATP-dependent interactions between DnaJ, DnaK and GrpE are required for fully efficient folding. Also involved, together with DnaK and GrpE, in the DNA replication of plasmids through activation of initiation proteins. The chain is Chaperone protein DnaJ from Rippkaea orientalis (strain PCC 8801 / RF-1) (Cyanothece sp. (strain PCC 8801)).